The sequence spans 295 residues: Acetylglutamate kinase (295 aa).

Residues Gly-67–Gly-68, Arg-89, and Asn-191 contribute to the substrate site.

The protein belongs to the acetylglutamate kinase family. ArgB subfamily.

It is found in the cytoplasm. It carries out the reaction N-acetyl-L-glutamate + ATP = N-acetyl-L-glutamyl 5-phosphate + ADP. It functions in the pathway amino-acid biosynthesis; L-arginine biosynthesis; N(2)-acetyl-L-ornithine from L-glutamate: step 2/4. In terms of biological role, catalyzes the ATP-dependent phosphorylation of N-acetyl-L-glutamate. The sequence is that of Acetylglutamate kinase from Nitrosomonas eutropha (strain DSM 101675 / C91 / Nm57).